Reading from the N-terminus, the 427-residue chain is Histidine--tRNA ligase (427 aa).

It belongs to the class-II aminoacyl-tRNA synthetase family. In terms of assembly, homodimer.

It is found in the cytoplasm. It catalyses the reaction tRNA(His) + L-histidine + ATP = L-histidyl-tRNA(His) + AMP + diphosphate + H(+). This is Histidine--tRNA ligase from Aster yellows witches'-broom phytoplasma (strain AYWB).